The sequence spans 1679 residues: [F-actin]-monooxygenase mical2b (1679 aa).

Positions 2–494 (GETEEERTSQ…RHLFISGEQD (493 aa)) are monooxygenase domain. FAD is bound by residues cysteine 97, 97-125 (CGFRTAIELALLGAKVVVIEKRDTFSRNN), glutamate 116, arginine 118, arginine 123, asparagine 125, and aspartate 398. The 104-residue stretch at 516 to 619 (EVRPGRLLLW…MVLYLSKFYE (104 aa)) folds into the Calponin-homology (CH) domain. Positions 658–679 (RKRIPKLDKKLEESDVNRKRKK) match the Nuclear localization signal motif. Disordered regions lie at residues 661–772 (IPKL…KAKW), 818–838 (SAYKSSERRPRSPLIPFTPTL), 874–907 (SSLFTGNPAQPQTDESSPAVSPSSPPQTIPESST), 1073–1163 (STRH…RSTA), 1194–1247 (KPED…DEIP), 1259–1283 (EYPKPSSSSPEPIVTSISSDPISFS), 1302–1342 (DLTN…PAPP), and 1473–1509 (RNKASAQQQQQQKSNSSSEDEQEPKLTHSGALQKKKE). Basic and acidic residues-rich tracts occupy residues 662-674 (PKLDKKLEESDVN) and 697-707 (GEREEQKENKV). Polar residues predominate over residues 874–888 (SSLFTGNPAQPQTDE). Residues 1011 to 1073 (DTCVFCQKRV…KMHFSQRKTS (63 aa)) enclose the LIM zinc-binding domain. Low complexity predominate over residues 1086–1099 (IRSSSITISNHTST). Polar residues predominate over residues 1112–1123 (DSSTQQDLQTLP). A compositionally biased stretch (basic and acidic residues) spans 1133–1143 (EVKDSSKKADP). The segment covering 1144-1154 (ADSAPACPDSP) has biased composition (low complexity). Positions 1202–1211 (LAEEDGNSDF) are enriched in acidic residues. Polar residues predominate over residues 1220 to 1242 (SKKPSNPSTDSNCLPTKDNSSTP). Residues 1259–1270 (EYPKPSSSSPEP) are compositionally biased toward low complexity. Positions 1302–1325 (DLTNPGKSGAEEQQQQHVKPSISL) are enriched in polar residues. Positions 1333-1342 (THPQPEPAPP) are enriched in pro residues. A compositionally biased stretch (low complexity) spans 1475-1489 (KASAQQQQQQKSNSS). A bMERB domain is found at 1517–1667 (KSDELKRLHR…EKAEDRDLES (151 aa)).

The protein belongs to the Mical family. It depends on FAD as a cofactor.

The protein localises to the nucleus. It is found in the cytoplasm. It carries out the reaction L-methionyl-[F-actin] + NADPH + O2 + H(+) = L-methionyl-(R)-S-oxide-[F-actin] + NADP(+) + H2O. In terms of biological role, nuclear monooxygenase that promotes depolymerization of F-actin by mediating oxidation of specific methionine residues on actin and regulates the srf signaling. Acts by modifying nuclear actin subunits through the addition of oxygen to form methionine-sulfoxide, leading to promote actin filament severing and prevent repolymerization. Acts as a key regulator of the srf signaling pathway elicited by nerve growth factor and serum: mediates oxidation and subsequent depolymerization of nuclear actin, leading to increase mkl1/mrtf-a presence in the nucleus and promote srf:mkl1/mrtf-a-dependent gene transcription. The protein is [F-actin]-monooxygenase mical2b of Danio rerio (Zebrafish).